The following is a 40-amino-acid chain: Photosystem II reaction center protein J (40 aa).

A helical transmembrane segment spans residues 8 to 28; it reads IPLWLIGTVAGIAVIGLVGVF.

It belongs to the PsbJ family. PSII is composed of 1 copy each of membrane proteins PsbA, PsbB, PsbC, PsbD, PsbE, PsbF, PsbH, PsbI, PsbJ, PsbK, PsbL, PsbM, PsbT, PsbX, PsbY, PsbZ, Psb30/Ycf12, at least 3 peripheral proteins of the oxygen-evolving complex and a large number of cofactors. It forms dimeric complexes.

It is found in the plastid. The protein resides in the chloroplast thylakoid membrane. In terms of biological role, one of the components of the core complex of photosystem II (PSII). PSII is a light-driven water:plastoquinone oxidoreductase that uses light energy to abstract electrons from H(2)O, generating O(2) and a proton gradient subsequently used for ATP formation. It consists of a core antenna complex that captures photons, and an electron transfer chain that converts photonic excitation into a charge separation. This is Photosystem II reaction center protein J from Secale cereale (Rye).